The chain runs to 265 residues: Tryptophan synthase alpha chain (265 aa).

Active-site proton acceptor residues include Glu50 and Asp61.

This sequence belongs to the TrpA family. In terms of assembly, tetramer of two alpha and two beta chains.

The enzyme catalyses (1S,2R)-1-C-(indol-3-yl)glycerol 3-phosphate + L-serine = D-glyceraldehyde 3-phosphate + L-tryptophan + H2O. It functions in the pathway amino-acid biosynthesis; L-tryptophan biosynthesis; L-tryptophan from chorismate: step 5/5. In terms of biological role, the alpha subunit is responsible for the aldol cleavage of indoleglycerol phosphate to indole and glyceraldehyde 3-phosphate. This Trichodesmium erythraeum (strain IMS101) protein is Tryptophan synthase alpha chain.